A 356-amino-acid chain; its full sequence is GDP-mannose:di-myo-inositol-1,3'-phosphate beta-1,2-mannosyltransferase (356 aa).

Belongs to the MDIP synthase family. The cofactor is Mg(2+).

It catalyses the reaction bis(myo-inositol) 1,3'-phosphate + GDP-alpha-D-mannose = 2-O-(beta-D-mannosyl)-bis(myo-inositol) 1,3'-phosphate + GDP + H(+). The catalysed reaction is 2-O-(beta-D-mannosyl)-bis(myo-inositol) 1,3'-phosphate + GDP-alpha-D-mannose = 2-O-(beta-D-mannosyl-(1-&gt;2)-beta-D-mannosyl)-bis(myo-inositol) 1,3'-phosphate + GDP + H(+). It carries out the reaction bis(myo-inositol) 1,3'-phosphate + 2 GDP-alpha-D-mannose = 2-O-(beta-D-mannosyl-(1-&gt;2)-beta-D-mannosyl)-bis(myo-inositol) 1,3'-phosphate + 2 GDP + 2 H(+). Its function is as follows. Catalyzes the transfer of the mannosyl group from GDP-mannose to di-myo-inositol-1,3'-phosphate (DIP), producing mannosyl-di-myo-inositol phosphate (MDIP). Can also use MDIP as an acceptor of a second mannose residue, yielding di-mannosyl-di-myo-inositol phosphate (MMDIP). In Aquifex aeolicus (strain VF5), this protein is GDP-mannose:di-myo-inositol-1,3'-phosphate beta-1,2-mannosyltransferase.